A 255-amino-acid chain; its full sequence is Pimeloyl-[acyl-carrier protein] methyl ester esterase (255 aa).

Residues 16–241 (LVLLHGWGLN…AAHAPFISHP (226 aa)) enclose the AB hydrolase-1 domain. Substrate-binding positions include Trp22, 81–82 (SL), and 142–146 (FLALQ). Ser81 serves as the catalytic Nucleophile. Active-site residues include Asp206 and His234. His234 contacts substrate.

This sequence belongs to the AB hydrolase superfamily. Carboxylesterase BioH family. In terms of assembly, monomer.

The protein resides in the cytoplasm. The catalysed reaction is 6-carboxyhexanoyl-[ACP] methyl ester + H2O = 6-carboxyhexanoyl-[ACP] + methanol + H(+). It functions in the pathway cofactor biosynthesis; biotin biosynthesis. Its function is as follows. The physiological role of BioH is to remove the methyl group introduced by BioC when the pimeloyl moiety is complete. It allows to synthesize pimeloyl-ACP via the fatty acid synthetic pathway through the hydrolysis of the ester bonds of pimeloyl-ACP esters. Also displays a weak thioesterase activity. Can form a complex with CoA, and may be involved in the condensation of CoA and pimelic acid into pimeloyl-CoA, a precursor in biotin biosynthesis. This Serratia marcescens protein is Pimeloyl-[acyl-carrier protein] methyl ester esterase.